The chain runs to 165 residues: GPI-anchored protein LORELEI (165 aa).

The signal sequence occupies residues 1 to 20 (MELILLFFFLMALLVSLSSS). The required for its function in pollen tube reception stretch occupies residues 82–93 (PYVSQINDMNSD). Asn-137 is a glycosylation site (N-linked (GlcNAc...) asparagine). Ser-139 is lipidated: GPI-anchor amidated serine. The propeptide at 140 to 165 (TADSTPRFISLLISAATAVFALLVLT) is removed in mature form.

Interacts with FER. In terms of tissue distribution, expressed in leaves, buds, flowers and stems. Highest expression in the synergid cells of the female gametophyte.

It localises to the cell membrane. In terms of biological role, female gametophyte-specific component of the signaling pathway required for fertilization. Required for reception of the pollen tube by the female gametophyte. Acts specifically at the synergid cell surface for pollen tube reception. Plays a role in double fertilization and early seed development. Component of the FER-regulated Rho GTPase signaling complex. Acts as a chaperone and coreceptor for FER. Required for localization of FER to the plasma membrane. In Arabidopsis thaliana (Mouse-ear cress), this protein is GPI-anchored protein LORELEI (LRE).